Consider the following 495-residue polypeptide: 3-octaprenyl-4-hydroxybenzoate carboxy-lyase (495 aa).

A Mn(2+)-binding site is contributed by N172. Residues 175–177, 189–191, and 194–195 each bind prenylated FMN; these read IYR, RWL, and RG. Residue E238 participates in Mn(2+) binding. The active-site Proton donor is D287.

Belongs to the UbiD family. As to quaternary structure, homohexamer. Prenylated FMN is required as a cofactor. The cofactor is Mn(2+).

The protein resides in the cell membrane. It catalyses the reaction a 4-hydroxy-3-(all-trans-polyprenyl)benzoate + H(+) = a 2-(all-trans-polyprenyl)phenol + CO2. The protein operates within cofactor biosynthesis; ubiquinone biosynthesis. In terms of biological role, catalyzes the decarboxylation of 3-octaprenyl-4-hydroxy benzoate to 2-octaprenylphenol, an intermediate step in ubiquinone biosynthesis. This Yersinia pseudotuberculosis serotype O:1b (strain IP 31758) protein is 3-octaprenyl-4-hydroxybenzoate carboxy-lyase.